The sequence spans 300 residues: Probable protein phosphatase 2C 3 (300 aa).

Residues 23-298 enclose the PPM-type phosphatase domain; sequence IFAASEMQGW…DNMTTILVYL (276 aa). 4 residues coordinate Mn(2+): Asp57, Gly58, Asp237, and Asp289.

Belongs to the PP2C family. Requires Mg(2+) as cofactor. Mn(2+) serves as cofactor.

It is found in the membrane. It catalyses the reaction O-phospho-L-seryl-[protein] + H2O = L-seryl-[protein] + phosphate. The catalysed reaction is O-phospho-L-threonyl-[protein] + H2O = L-threonyl-[protein] + phosphate. Its function is as follows. Enzyme with a broad specificity. This Paramecium tetraurelia protein is Probable protein phosphatase 2C 3.